Consider the following 927-residue polypeptide: Band 3 anion transport protein (927 aa).

M1 is modified (N-acetylmethionine). The Cytoplasmic segment spans residues 1 to 420 (MGDMQDHEKV…LSDITDALSP (420 aa)). S18 is modified (phosphoserine). A phosphotyrosine mark is found at Y31 and Y56. The globular stretch occupies residues 69–303 (SQVYVELQEL…LGRAAATLMT (235 aa)). The tract at residues 190–199 (AVLTRSGAPS) is interaction with ANK1. Phosphoserine is present on residues S199 and S222. Residues 317–370 (RGELLSSLDSFLDCSLVLPPTEAPSEKALLNLVPVQKELLRKRYLPRPAKPDPN) are dimerization arm. A disordered region spans residues 367 to 390 (PDPNLYEALDGGKEGPGDEDDPLR). Y372 is modified (phosphotyrosine). A helical membrane pass occupies residues 421–444 (QVLAAVIFIYFAALSPAVTFGGLL). Over 445–452 (GEKTRNLM) the chain is Extracellular. The chain crosses the membrane as a helical span at residues 453–473 (GVSELLISTAVQGILFALLGA). Residues 474–476 (QPL) are Cytoplasmic-facing. The chain crosses the membrane as a discontinuously helical span at residues 477 to 493 (LVLGFSGPLLVFEEAFY). The Extracellular segment spans residues 494-502 (SFCESNNLE). A helical membrane pass occupies residues 503-523 (YIVGRAWIGFWLILLVVLVVA). Topologically, residues 524–535 (FEGSFLVQYISR) are cytoplasmic. Residues 536–558 (YTQEIFSFLISLIFIYETFSKLI) form a helical membrane-spanning segment. Over 559–586 (KIFQDYPLQESYAPVVMKPKPQGPVPNT) the chain is Extracellular. Residues 587–607 (ALLSLVLMVGTFLLAMMLRKF) traverse the membrane as a helical segment. The Cytoplasmic segment spans residues 608-618 (KNSTYFPGKLR). The helical transmembrane segment at 619 to 639 (RVIGDFGVPISILIMVLVDTF) threads the bilayer. Residues 640 to 679 (IKNTYTQKLSVPDGLKVSNSSARGWVIHPLGLYNHFPKWM) are Extracellular-facing. N658 is a glycosylation site (N-linked (GlcNAc...) asparagine). The chain crosses the membrane as a helical span at residues 680–700 (MFASVLPALLVFILIFLESQI). The Cytoplasmic portion of the chain corresponds to 701-716 (TTLIVSKPERKMIKGS). Residues 717-735 (GFHLDLLLVVGMGGVAALF) form a helical membrane-spanning segment. Residues 736–753 (GMPWLSATTVRSVTHANA) form a discontinuously helical membrane-spanning segment. Over 754 to 776 (LTVMGKASGPGAAAQIQEVKEQR) the chain is Cytoplasmic. 2 consecutive transmembrane segments (helical) span residues 777 to 797 (ISGL…PILS) and 798 to 816 (RIPL…ITSL). The Cytoplasmic portion of the chain corresponds to 817–854 (SGIQLFDRILLLFKPPKYHPDVPFVKRVKTWRMHLFTG). The segment at residues 855 to 885 (IQIICLAVLWVVKSTPASLALPFVLILTVPL) is an intramembrane region (discontinuously helical). C859 is lipidated: S-palmitoyl cysteine. Residues 886 to 927 (RRLLLPLIFRELELQCLDGDDAKVTFDEAEGLDEYDEVPMPV) are Cytoplasmic-facing. Y920 bears the Phosphotyrosine mark.

Belongs to the anion exchanger (TC 2.A.31) family. A dimer in solution, but in its membrane environment, it exists primarily as a mixture of dimers and tetramers and spans the membrane asymmetrically. Component of the ankyrin-1 complex in the erythrocyte, composed of ANK1, RHCE, RHAG, SLC4A1, EPB42, GYPA, GYPB and AQP1. Interacts with STOM; this interaction positively regulates SLC4A1 activity. Interacts with GYPA; a GYPA monomer is bound at each end of the SLC4A1 dimer forming a heterotetramer. Three SLC4A1 dimers (Band 3-I, Band 3-II and Band 3-III) participates in the ankyrin-1 complex. Interacts (via the cytoplasmic domain) with EPB42; this interaction is mediated by the SLC4A1 Band 3-I dimer. Interacts (via the cytoplasmic domain) directly with ANK1; this interaction is mediated by the SLC4A1 Band 3-II and Band 3-III dimers. As to quaternary structure, interacts with TMEM139. In terms of tissue distribution, kidney.

It is found in the cell membrane. Its subcellular location is the basolateral cell membrane. It catalyses the reaction hydrogencarbonate(in) + chloride(out) = hydrogencarbonate(out) + chloride(in). Functions both as a transporter that mediates electroneutral anion exchange across the cell membrane and as a structural protein. Component of the ankyrin-1 complex of the erythrocyte membrane; required for normal flexibility and stability of the erythrocyte membrane and for normal erythrocyte shape via the interactions of its cytoplasmic domain with cytoskeletal proteins, glycolytic enzymes, and hemoglobin. Functions as a transporter that mediates the 1:1 exchange of inorganic anions across the erythrocyte membrane. Mediates chloride-bicarbonate exchange in the kidney, and is required for normal acidification of the urine. The chain is Band 3 anion transport protein from Rattus norvegicus (Rat).